Consider the following 388-residue polypeptide: Phosphopentomutase (388 aa).

Mn(2+)-binding residues include aspartate 9, aspartate 283, histidine 288, aspartate 324, histidine 325, and histidine 336.

It belongs to the phosphopentomutase family. The cofactor is Mn(2+).

Its subcellular location is the cytoplasm. It catalyses the reaction 2-deoxy-alpha-D-ribose 1-phosphate = 2-deoxy-D-ribose 5-phosphate. The enzyme catalyses alpha-D-ribose 1-phosphate = D-ribose 5-phosphate. The protein operates within carbohydrate degradation; 2-deoxy-D-ribose 1-phosphate degradation; D-glyceraldehyde 3-phosphate and acetaldehyde from 2-deoxy-alpha-D-ribose 1-phosphate: step 1/2. In terms of biological role, isomerase that catalyzes the conversion of deoxy-ribose 1-phosphate (dRib-1-P) and ribose 1-phosphate (Rib-1-P) to deoxy-ribose 5-phosphate (dRib-5-P) and ribose 5-phosphate (Rib-5-P), respectively. The chain is Phosphopentomutase from Deinococcus radiodurans (strain ATCC 13939 / DSM 20539 / JCM 16871 / CCUG 27074 / LMG 4051 / NBRC 15346 / NCIMB 9279 / VKM B-1422 / R1).